Here is a 747-residue protein sequence, read N- to C-terminus: NAD(P)H-quinone oxidoreductase subunit 5, chloroplastic (747 aa).

Transmembrane regions (helical) follow at residues 9 to 29 (WIIP…LLLF), 40 to 60 (WAFP…DLSI), 89 to 109 (IDSL…LVLI), 125 to 145 (FAYL…SNLI), 147 to 167 (VYIF…FWFT), 185 to 205 (GDFG…SLEF), 219 to 239 (NEVN…GSVA), 258 to 278 (TPIS…FLVA), 280 to 300 (LLPF…IGII), 327 to 347 (LGYM…FHLI), 354 to 374 (ALLF…VGYS), 396 to 416 (TAFL…CFWS), 425 to 445 (WLYS…TAFY), 552 to 572 (LFSM…GISF), 606 to 626 (FFTN…IASF), and 727 to 747 (YILF…SFFI).

This sequence belongs to the complex I subunit 5 family. In terms of assembly, NDH is composed of at least 16 different subunits, 5 of which are encoded in the nucleus.

The protein resides in the plastid. It localises to the chloroplast thylakoid membrane. It catalyses the reaction a plastoquinone + NADH + (n+1) H(+)(in) = a plastoquinol + NAD(+) + n H(+)(out). The catalysed reaction is a plastoquinone + NADPH + (n+1) H(+)(in) = a plastoquinol + NADP(+) + n H(+)(out). Functionally, NDH shuttles electrons from NAD(P)H:plastoquinone, via FMN and iron-sulfur (Fe-S) centers, to quinones in the photosynthetic chain and possibly in a chloroplast respiratory chain. The immediate electron acceptor for the enzyme in this species is believed to be plastoquinone. Couples the redox reaction to proton translocation, and thus conserves the redox energy in a proton gradient. This Lotus japonicus (Lotus corniculatus var. japonicus) protein is NAD(P)H-quinone oxidoreductase subunit 5, chloroplastic (ndhF).